A 188-amino-acid polypeptide reads, in one-letter code: Elongation factor P (188 aa).

Belongs to the elongation factor P family.

Its subcellular location is the cytoplasm. It functions in the pathway protein biosynthesis; polypeptide chain elongation. Its function is as follows. Involved in peptide bond synthesis. Stimulates efficient translation and peptide-bond synthesis on native or reconstituted 70S ribosomes in vitro. Probably functions indirectly by altering the affinity of the ribosome for aminoacyl-tRNA, thus increasing their reactivity as acceptors for peptidyl transferase. The sequence is that of Elongation factor P from Phytoplasma mali (strain AT).